The primary structure comprises 409 residues: MEMEYIRVAEDENEEPMEIPSEDDGTVLLSTVTAQFPGACGLRYRNPVNQCMRGVRLVEGILHAPENGWGNLVYVVNYPKDNKRKMDETDASSAVKIKRAVTKTSDLIVLGLPWKTTEQDLKDYFSTFGEVIMVQVKKDAKTGHSKGFGFVRFADYETQVKVMSQRHMIDGRWCDCKLPNSKSPDEPMRSRKVFVGRCTEDMSAEELRQFFSQYGEVVDVFIPKPFRAFAFVTFADDQVAQSLCGEDLIIKGVSVHVSTAEPKHNNNRQLERGGRFPGPSFGNQGYPNSRPSSGALGNNQGGNMGGGGGMNFGAFSINPAMMAAAQAALQSSWGMMGMLASQQNQSGPQGSNQGQGNQQRDQPQSFGSNNSYGSNSGAIGWGSPNAGSGSGFNGGFSSSMESKSSGWGM.

RRM domains lie at 105-200 (SDLI…RCTE) and 191-262 (RKVF…TAEP). Disordered regions lie at residues 260–302 (AEPK…NQGG) and 341–409 (SQQN…GWGM). Residues 261 to 274 (EPKHNNNRQLERGG) show a composition bias toward basic and acidic residues. A compositionally biased stretch (polar residues) spans 281–292 (FGNQGYPNSRPS). Composition is skewed to low complexity over residues 341 to 387 (SQQN…PNAG) and 395 to 409 (GFSS…GWGM).

As to quaternary structure, homodimer.

It is found in the nucleus. The protein localises to the cytoplasm. It localises to the stress granule. The protein resides in the mitochondrion. In terms of biological role, probably involved in transcriptional repression. May play a role in the maintenance of the circadian clock periodicity. The sequence is that of TAR DNA-binding protein 43 (tardbp) from Xenopus tropicalis (Western clawed frog).